The primary structure comprises 324 residues: Olfactory receptor 8U3 (324 aa).

Over 1-25 the chain is Extracellular; that stretch reads MAEVNIIYVTVFILKGITNRPELQA. The helical transmembrane segment at 26–46 threads the bilayer; sequence PCFGVFLVIYLVTVLGNLGLI. The Cytoplasmic segment spans residues 47–54; the sequence is TLIKIDTR. A helical membrane pass occupies residues 55–75; that stretch reads LHTPMYYFLSHLAFVDLCYSS. The Extracellular segment spans residues 76 to 99; it reads AITPKMMVNFVVERNTIPFHACAT. A disulfide bridge connects residues C97 and C189. A helical transmembrane segment spans residues 100–120; it reads QLGCFLTFMITECFLLASMAY. At 121 to 139 the chain is on the cytoplasmic side; it reads DCYVAICSPLHYSTLMSRR. A helical transmembrane segment spans residues 140–160; that stretch reads VCIQLVAVPYIYSFLVALFHT. Topologically, residues 161-196 are extracellular; the sequence is VITFRLTYCGPNLINHFYCDDLPFLALSCSDTHMKE. A helical membrane pass occupies residues 197-217; that stretch reads ILIFAFAGFDMISSSSIVLTS. Residues 218–237 lie on the Cytoplasmic side of the membrane; the sequence is YIFIIAAILRIRSTQGQHKA. The chain crosses the membrane as a helical span at residues 238–258; the sequence is ISTCGSHMVTVTIFYGTLIFM. The Extracellular segment spans residues 259 to 271; that stretch reads YLQPKSNHSLDTD. N265 carries an N-linked (GlcNAc...) asparagine glycan. A helical membrane pass occupies residues 272–292; it reads KMASVFYTVVIPMLNPLIYSL. The Cytoplasmic portion of the chain corresponds to 293–324; the sequence is RNKEVKDASKKALDKGCENLQILTFLKIRKLY.

This sequence belongs to the G-protein coupled receptor 1 family.

It localises to the cell membrane. Odorant receptor. This is Olfactory receptor 8U3 from Homo sapiens (Human).